A 511-amino-acid chain; its full sequence is GMP synthase [glutamine-hydrolyzing] (511 aa).

The 191-residue stretch at Ala-5–Asn-195 folds into the Glutamine amidotransferase type-1 domain. The active-site Nucleophile is the Cys-82. Active-site residues include His-169 and Glu-171. A GMPS ATP-PPase domain is found at Trp-196–Arg-386. Ser-223–Leu-229 contributes to the ATP binding site.

In terms of assembly, homodimer.

The catalysed reaction is XMP + L-glutamine + ATP + H2O = GMP + L-glutamate + AMP + diphosphate + 2 H(+). It functions in the pathway purine metabolism; GMP biosynthesis; GMP from XMP (L-Gln route): step 1/1. Catalyzes the synthesis of GMP from XMP. This chain is GMP synthase [glutamine-hydrolyzing] (guaA), found in Borreliella burgdorferi (strain N40) (Borrelia burgdorferi).